Consider the following 273-residue polypeptide: 4-hydroxy-tetrahydrodipicolinate reductase (273 aa).

12–17 (GSGGRM) contacts NAD(+). An NADP(+)-binding site is contributed by Arg39. Residues 102–104 (GTT) and 126–129 (AANF) contribute to the NAD(+) site. His159 serves as the catalytic Proton donor/acceptor. His160 provides a ligand contact to (S)-2,3,4,5-tetrahydrodipicolinate. Lys163 (proton donor) is an active-site residue. Residue 169–170 (GT) participates in (S)-2,3,4,5-tetrahydrodipicolinate binding.

The protein belongs to the DapB family. In terms of assembly, homotetramer.

Its subcellular location is the cytoplasm. The catalysed reaction is (S)-2,3,4,5-tetrahydrodipicolinate + NAD(+) + H2O = (2S,4S)-4-hydroxy-2,3,4,5-tetrahydrodipicolinate + NADH + H(+). It catalyses the reaction (S)-2,3,4,5-tetrahydrodipicolinate + NADP(+) + H2O = (2S,4S)-4-hydroxy-2,3,4,5-tetrahydrodipicolinate + NADPH + H(+). Its pathway is amino-acid biosynthesis; L-lysine biosynthesis via DAP pathway; (S)-tetrahydrodipicolinate from L-aspartate: step 4/4. Its function is as follows. Catalyzes the conversion of 4-hydroxy-tetrahydrodipicolinate (HTPA) to tetrahydrodipicolinate. In Serratia proteamaculans (strain 568), this protein is 4-hydroxy-tetrahydrodipicolinate reductase.